The sequence spans 158 residues: NAD(P)H-quinone oxidoreductase subunit N (158 aa).

The protein belongs to the complex I NdhN subunit family. As to quaternary structure, NDH-1 can be composed of about 15 different subunits; different subcomplexes with different compositions have been identified which probably have different functions.

It localises to the cellular thylakoid membrane. The enzyme catalyses a plastoquinone + NADH + (n+1) H(+)(in) = a plastoquinol + NAD(+) + n H(+)(out). It catalyses the reaction a plastoquinone + NADPH + (n+1) H(+)(in) = a plastoquinol + NADP(+) + n H(+)(out). Functionally, NDH-1 shuttles electrons from an unknown electron donor, via FMN and iron-sulfur (Fe-S) centers, to quinones in the respiratory and/or the photosynthetic chain. The immediate electron acceptor for the enzyme in this species is believed to be plastoquinone. Couples the redox reaction to proton translocation, and thus conserves the redox energy in a proton gradient. Cyanobacterial NDH-1 also plays a role in inorganic carbon-concentration. In Nostoc punctiforme (strain ATCC 29133 / PCC 73102), this protein is NAD(P)H-quinone oxidoreductase subunit N.